We begin with the raw amino-acid sequence, 860 residues long: Valine--tRNA ligase (860 aa).

The 'HIGH' region motif lies at 43 to 53 (PTVSGALHVGH). A disordered region spans residues 469-491 (LPVDPSSDAPTGYQESQRNQPGG). The short motif at 574–578 (KMSKS) is the 'KMSKS' region element. An ATP-binding site is contributed by Lys-577.

This sequence belongs to the class-I aminoacyl-tRNA synthetase family. ValS type 2 subfamily. Monomer.

It is found in the cytoplasm. It carries out the reaction tRNA(Val) + L-valine + ATP = L-valyl-tRNA(Val) + AMP + diphosphate. Its function is as follows. Catalyzes the attachment of valine to tRNA(Val). As ValRS can inadvertently accommodate and process structurally similar amino acids such as threonine, to avoid such errors, it has a 'posttransfer' editing activity that hydrolyzes mischarged Thr-tRNA(Val) in a tRNA-dependent manner. This chain is Valine--tRNA ligase, found in Salinispora tropica (strain ATCC BAA-916 / DSM 44818 / JCM 13857 / NBRC 105044 / CNB-440).